A 737-amino-acid chain; its full sequence is Pentatricopeptide repeat-containing protein At3g49740 (737 aa).

19 PPR repeats span residues 20-55 (TLLN…TLRP), 56-90 (DQYS…GLLC), 91-121 (HSHV…IDEP), 122-152 (DVYS…MPER), 154-188 (DVAI…GVRH), 189-222 (DKFG…GFFI), 223-253 (ASSV…TDVA), 256-289 (DQVT…SLRP), 290-321 (TDLT…GYEK), 322-352 (YTLV…LEEK), 353-387 (DLVT…GVKP), 388-418 (DEFT…FGLS), 420-454 (KIEI…NLIS), 455-485 (WNAI…EVRI), 488-522 (DAYT…GQFK), 523-553 (ETLI…MSEK), 554-588 (DVVS…GKVI), 590-620 (DAAT…MVEF), and 626-656 (NVDH…SEKT). The segment at 663–737 (VWWALFSACA…KQRGCSWMRL (75 aa)) is type E motif; degenerate.

This sequence belongs to the PPR family. PCMP-E subfamily.

The sequence is that of Pentatricopeptide repeat-containing protein At3g49740 (PCMP-E84) from Arabidopsis thaliana (Mouse-ear cress).